A 158-amino-acid polypeptide reads, in one-letter code: SsrA-binding protein (158 aa).

It belongs to the SmpB family.

It is found in the cytoplasm. In terms of biological role, required for rescue of stalled ribosomes mediated by trans-translation. Binds to transfer-messenger RNA (tmRNA), required for stable association of tmRNA with ribosomes. tmRNA and SmpB together mimic tRNA shape, replacing the anticodon stem-loop with SmpB. tmRNA is encoded by the ssrA gene; the 2 termini fold to resemble tRNA(Ala) and it encodes a 'tag peptide', a short internal open reading frame. During trans-translation Ala-aminoacylated tmRNA acts like a tRNA, entering the A-site of stalled ribosomes, displacing the stalled mRNA. The ribosome then switches to translate the ORF on the tmRNA; the nascent peptide is terminated with the 'tag peptide' encoded by the tmRNA and targeted for degradation. The ribosome is freed to recommence translation, which seems to be the essential function of trans-translation. The protein is SsrA-binding protein of Acinetobacter baumannii (strain AB307-0294).